Reading from the N-terminus, the 176-residue chain is Large ribosomal subunit protein eL20 (176 aa).

A Glycyl lysine isopeptide (Lys-Gly) (interchain with G-Cter in SUMO2) cross-link involves residue Lys-11. Tyr-63 is subject to Phosphotyrosine. Ser-71 is modified (phosphoserine). Lys-76 is modified (N6-succinyllysine). A Phosphoserine modification is found at Ser-123. Residues Lys-128 and Lys-170 each participate in a glycyl lysine isopeptide (Lys-Gly) (interchain with G-Cter in SUMO2) cross-link.

This sequence belongs to the eukaryotic ribosomal protein eL20 family. In terms of assembly, component of the large ribosomal subunit. Binds IPO9 with high affinity.

It localises to the cytoplasm. Functionally, component of the large ribosomal subunit. The ribosome is a large ribonucleoprotein complex responsible for the synthesis of proteins in the cell. In Mus musculus (Mouse), this protein is Large ribosomal subunit protein eL20 (Rpl18a).